We begin with the raw amino-acid sequence, 317 residues long: MIIGTRGSQLALAQTENVARLLKERGVETSIKIIKTSGDRFTDRPLHAVSGGVGAFVRELDDVMLAGEIDIAVHSMKDMPTIRPEGLPTVAVLKRDTPFDILLTYDGTTLDELPEQAIIGTSSLRRTAQIRRYRPDLITQELRGNIDTRLRKLKEGQYDGILLAKAGLERMGWEIDGEILSPDFFCPSPNQGTVAVVTRADPEIEAAVSGLDHTESRIVTEIERILISELGGGCTTPIGSYAELTSDKQEIHIRAEVLSLDGKEDVRIDEFIPMLGGLEKARELGHRLVEMGGKRLAEEALLQISRNACGTENSFDY.

Position 234 is an S-(dipyrrolylmethanemethyl)cysteine (cysteine 234).

This sequence belongs to the HMBS family. The cofactor is dipyrromethane.

The catalysed reaction is 4 porphobilinogen + H2O = hydroxymethylbilane + 4 NH4(+). It functions in the pathway porphyrin-containing compound metabolism; protoporphyrin-IX biosynthesis; coproporphyrinogen-III from 5-aminolevulinate: step 2/4. Functionally, tetrapolymerization of the monopyrrole PBG into the hydroxymethylbilane pre-uroporphyrinogen in several discrete steps. This chain is Probable porphobilinogen deaminase, found in Methanosarcina acetivorans (strain ATCC 35395 / DSM 2834 / JCM 12185 / C2A).